We begin with the raw amino-acid sequence, 868 residues long: Translation initiation factor IF-2 (868 aa).

Positions 201 to 269 are disordered; the sequence is KEEVKPEKVS…GTEKSDKYRE (69 aa). The segment covering 249 to 260 has biased composition (basic residues); that stretch reads RGGRSKFKKKKG. The tr-type G domain occupies 368-537; that stretch reads GRAPVVTIMG…LLQSEVLELK (170 aa). Positions 377–384 are G1; sequence GHVDHGKT. A GTP-binding site is contributed by 377–384; sequence GHVDHGKT. Residues 402–406 form a G2 region; it reads GITQH. The segment at 423 to 426 is G3; sequence DTPG. Residues 423-427 and 477-480 contribute to the GTP site; these read DTPGH and NKMD. The tract at residues 477-480 is G4; that stretch reads NKMD. The tract at residues 513-515 is G5; the sequence is SAK.

It belongs to the TRAFAC class translation factor GTPase superfamily. Classic translation factor GTPase family. IF-2 subfamily.

Its subcellular location is the cytoplasm. In terms of biological role, one of the essential components for the initiation of protein synthesis. Protects formylmethionyl-tRNA from spontaneous hydrolysis and promotes its binding to the 30S ribosomal subunits. Also involved in the hydrolysis of GTP during the formation of the 70S ribosomal complex. The sequence is that of Translation initiation factor IF-2 from Legionella pneumophila (strain Corby).